Reading from the N-terminus, the 503-residue chain is Inosine-5'-monophosphate dehydrogenase 1 (503 aa).

Ser2 carries the post-translational modification N-acetylserine. One can recognise a CBS domain in the interval 167–225 (MKSCDSSDYCVPWEIDFEKLEFVLEDKQKGFVVLERDGETVNVVTKDDIQRVKGYPKSG). Residues 265-267 (DSS) and 315-317 (GMG) each bind NAD(+). Gly317 and Gly319 together coordinate K(+). An IMP-binding site is contributed by Ser320. Cys322 is a binding site for K(+). The active-site Thioimidate intermediate is Cys322. IMP is bound by residues 355 to 357 (DGG), 378 to 379 (GS), and 402 to 406 (YRGMG). Residue Arg418 is the Proton acceptor of the active site. Gln430 provides a ligand contact to IMP. Residues Glu489, Gly490, and Gly491 each contribute to the K(+) site.

It belongs to the IMPDH/GMPR family. In terms of assembly, homotetramer. Requires K(+) as cofactor.

It is found in the cytoplasm. It carries out the reaction IMP + NAD(+) + H2O = XMP + NADH + H(+). It participates in purine metabolism; XMP biosynthesis via de novo pathway; XMP from IMP: step 1/1. With respect to regulation, mycophenolic acid (MPA) is a non-competitive inhibitor that prevents formation of the closed enzyme conformation by binding to the same site as the amobile flap. In contrast, mizoribine monophosphate (MZP) is a competitive inhibitor that induces the closed conformation. MPA is a potent inhibitor of mammalian IMPDHs but a poor inhibitor of the bacterial enzymes. MZP is a more potent inhibitor of bacterial IMPDH. In terms of biological role, catalyzes the conversion of inosine 5'-phosphate (IMP) to xanthosine 5'-phosphate (XMP), the first committed and rate-limiting step in the de novo synthesis of guanine nucleotides, and therefore plays an important role in the regulation of cell growth. The chain is Inosine-5'-monophosphate dehydrogenase 1 from Arabidopsis thaliana (Mouse-ear cress).